The sequence spans 382 residues: p21-activated protein kinase-interacting protein 1 (382 aa).

WD repeat units lie at residues 37-77 (THHS…EHGA), 80-120 (HHAG…KTFK), 122-160 (HRGH…SAFI), 202-240 (TNGK…CLCE), and 243-284 (AHEN…KVPP). The interval 313–382 (LPPAAEPCPD…MSEKKRKKKM (70 aa)) is disordered. Positions 352 to 363 (DSKQPTKGNSPV) are enriched in polar residues. Residues 365 to 382 (AKKRKMATMSEKKRKKKM) are compositionally biased toward basic residues.

Interacts with PAK1.

Its subcellular location is the nucleus. It localises to the nucleolus. Negatively regulates the PAK1 kinase. PAK1 is a member of the PAK kinase family, which has been shown to play a positive role in the regulation of signaling pathways involving MAPK8 and RELA. PAK1 exists as an inactive homodimer, which is activated by binding of small GTPases such as CDC42 to an N-terminal regulatory domain. PAK1IP1 also binds to the N-terminus of PAK1, and inhibits the specific activation of PAK1 by CDC42. May be involved in ribosomal large subunit assembly. The polypeptide is p21-activated protein kinase-interacting protein 1 (Pak1ip1) (Mus musculus (Mouse)).